The following is a 453-amino-acid chain: Tol-Pal system protein TolB (453 aa).

An N-terminal signal peptide occupies residues 1-31; the sequence is MINNLSISMTKVIKIILAIIIILFNTLSIFA.

It belongs to the TolB family. In terms of assembly, the Tol-Pal system is composed of five core proteins: the inner membrane proteins TolA, TolQ and TolR, the periplasmic protein TolB and the outer membrane protein Pal. They form a network linking the inner and outer membranes and the peptidoglycan layer.

It is found in the periplasm. Its function is as follows. Part of the Tol-Pal system, which plays a role in outer membrane invagination during cell division and is important for maintaining outer membrane integrity. This is Tol-Pal system protein TolB from Orientia tsutsugamushi (strain Ikeda) (Rickettsia tsutsugamushi).